We begin with the raw amino-acid sequence, 532 residues long: QDSASPIRNTHTGQVRGSLVHVEGTDAGVHTFLGIPFAKPPLGPLRFAPPEPAEAWSGVRDGTSLPAMCLQNLAIMDQDVLLLHFTPPSIPMSEDCLYLNIYSPAHAREGSDLPVMVWIHGGGLTMGMASMYDGSALAAFEDVVVVTIQYRLGVLGFFSTGDQHATGNHGYLDQVAALRWVQKNIAHFGGNPGRVTIFGESAGGTSVSSHVLSPMSQGLFHGAIMESLVALLPGLITSSSEVVSTVVANLSRCGQVDSETLVRCLRAKSEEEMLAITQVFMLIPGVVDGVFLPRHPEELLALADFQPVPSIIGINNDEYGWIIPKLLLAIDPQEERDRQAMREIMHQATKQLMLPPALGDLLMDEYMGSNEDPKHLMAQFQEMMADAMFVMPALRVAHLQRSHAPTYFYEFQHRPSFTKDLRPPHVRADHGDEVVFVFRSHLFGSKVPLTEEEELLSRRVMKYWANFARNRNPNGEGLAHWPLFDLDQRYLQLNMQPAVGQALKARRLQFWTHTLPQRVQELRGTEQKHTEL.

Residue Gln1 is modified to Pyrrolidone carboxylic acid. Cys69 and Cys96 are oxidised to a cystine. Ser201 (acyl-ester intermediate) is an active-site residue. Asn249 is a glycosylation site (N-linked (GlcNAc...) asparagine). Cys253 and Cys264 are joined by a disulfide. Residues Glu318 and His430 each act as charge relay system in the active site. Positions 529–532 match the Prevents secretion from ER motif; it reads HTEL.

It belongs to the type-B carboxylesterase/lipase family. As to quaternary structure, monomer.

The protein localises to the endoplasmic reticulum lumen. The catalysed reaction is a carboxylic ester + H2O = an alcohol + a carboxylate + H(+). It carries out the reaction cocaine + H2O = ecgonine methyl ester + benzoate + H(+). It catalyses the reaction 2-(5Z,8Z,11Z,14Z-eicosatetraenoyl)-glycerol + H2O = glycerol + (5Z,8Z,11Z,14Z)-eicosatetraenoate + H(+). The enzyme catalyses prostaglandin E2 1-glyceryl ester + H2O = prostaglandin E2 + glycerol + H(+). The catalysed reaction is prostaglandin F2alpha 1-glyceryl ester + H2O = prostaglandin F2alpha + glycerol + H(+). Functionally, involved in the detoxification of xenobiotics and in the activation of ester and amide prodrugs. Converts monoacylglycerides to free fatty acids and glycerol. Hydrolyzes of 2-arachidonoylglycerol and prostaglandins. The sequence is that of Cocaine esterase (CES2) from Oryctolagus cuniculus (Rabbit).